Reading from the N-terminus, the 648-residue chain is Phosphomethylpyrimidine synthase (648 aa).

Residues Asn236, Met265, Tyr294, His330, 350-352, 391-394, and Glu430 each bind substrate; these read SRG and DGLR. His434 serves as a coordination point for Zn(2+). Residue Tyr457 participates in substrate binding. A Zn(2+)-binding site is contributed by His498. The [4Fe-4S] cluster site is built by Cys578, Cys581, and Cys586.

This sequence belongs to the ThiC family. As to quaternary structure, homodimer. The cofactor is [4Fe-4S] cluster.

The catalysed reaction is 5-amino-1-(5-phospho-beta-D-ribosyl)imidazole + S-adenosyl-L-methionine = 4-amino-2-methyl-5-(phosphooxymethyl)pyrimidine + CO + 5'-deoxyadenosine + formate + L-methionine + 3 H(+). It participates in cofactor biosynthesis; thiamine diphosphate biosynthesis. Catalyzes the synthesis of the hydroxymethylpyrimidine phosphate (HMP-P) moiety of thiamine from aminoimidazole ribotide (AIR) in a radical S-adenosyl-L-methionine (SAM)-dependent reaction. The polypeptide is Phosphomethylpyrimidine synthase (Aliivibrio salmonicida (strain LFI1238) (Vibrio salmonicida (strain LFI1238))).